We begin with the raw amino-acid sequence, 253 residues long: TasA anchoring/assembly protein (253 aa).

A signal peptide spans 1 to 32; sequence MFRLFHNQQKAKTKLKVLLIFQLSVIFSLTAA. The important for TasA fiber formation stretch occupies residues 50-57; sequence TFDVSLQT. Residues 190–241 show a composition bias toward basic and acidic residues; sequence EKPTVPKKETKSDVKKENETTQKDIPEKTMKEETSQEAVTKEKETQSDQKES. Residues 190-253 form a disordered region; sequence EKPTVPKKET…EDEKSNEADQ (64 aa).

It is found in the secreted. The protein resides in the cell wall. Functionally, required for biofilm formation. Required for the proper anchoring and polymerization of TasA amyloid fibers at the cell surface. Is also a minor component of TasA fibers. The protein is TasA anchoring/assembly protein of Bacillus subtilis (strain 168).